We begin with the raw amino-acid sequence, 324 residues long: Phospho-N-acetylmuramoyl-pentapeptide-transferase (324 aa).

Helical transmembrane passes span 5 to 25 (GLLV…PLFI), 52 to 72 (PTMG…IMAI), 77 to 97 (LGAE…IGFL), 117 to 137 (LLGQ…QGFD), 147 to 167 (ITFD…IGGS), 176 to 196 (LDGL…IIAV), 202 to 222 (AVAI…VFNA), 227 to 247 (VFMG…VAIL), 253 to 273 (LLVI…IQVI), and 302 to 322 (VVVT…YIGV).

The protein belongs to the glycosyltransferase 4 family. MraY subfamily. The cofactor is Mg(2+).

Its subcellular location is the cell membrane. The enzyme catalyses UDP-N-acetyl-alpha-D-muramoyl-L-alanyl-gamma-D-glutamyl-meso-2,6-diaminopimeloyl-D-alanyl-D-alanine + di-trans,octa-cis-undecaprenyl phosphate = di-trans,octa-cis-undecaprenyl diphospho-N-acetyl-alpha-D-muramoyl-L-alanyl-D-glutamyl-meso-2,6-diaminopimeloyl-D-alanyl-D-alanine + UMP. It functions in the pathway cell wall biogenesis; peptidoglycan biosynthesis. Catalyzes the initial step of the lipid cycle reactions in the biosynthesis of the cell wall peptidoglycan: transfers peptidoglycan precursor phospho-MurNAc-pentapeptide from UDP-MurNAc-pentapeptide onto the lipid carrier undecaprenyl phosphate, yielding undecaprenyl-pyrophosphoryl-MurNAc-pentapeptide, known as lipid I. This Bacillus cytotoxicus (strain DSM 22905 / CIP 110041 / 391-98 / NVH 391-98) protein is Phospho-N-acetylmuramoyl-pentapeptide-transferase.